The primary structure comprises 96 residues: Small ribosomal subunit protein bS6 (96 aa).

Belongs to the bacterial ribosomal protein bS6 family.

In terms of biological role, binds together with bS18 to 16S ribosomal RNA. This is Small ribosomal subunit protein bS6 from Streptococcus thermophilus (strain ATCC BAA-250 / LMG 18311).